The primary structure comprises 296 residues: Uridine phosphorylase A (296 aa).

Residues G46, R77, and 121 to 124 each bind phosphate; that span reads RLGT. Uridine-binding positions include 125–126 and 201–203; these read SG and QGR.

The protein belongs to the PNP/UDP phosphorylase family. In terms of assembly, homodimer.

The catalysed reaction is uridine + phosphate = alpha-D-ribose 1-phosphate + uracil. The protein operates within pyrimidine metabolism; UMP biosynthesis via salvage pathway; uracil from uridine (phosphorylase route): step 1/1. Catalyzes the reversible phosphorylytic cleavage of uridine and deoxyuridine to uracil and ribose- or deoxyribose-1-phosphate. The produced molecules are then utilized as carbon and energy sources or in the rescue of pyrimidine bases for nucleotide synthesis. The sequence is that of Uridine phosphorylase A from Schistosoma mansoni (Blood fluke).